Consider the following 553-residue polypeptide: Vacuolar fusion protein MON1 homolog B (553 aa).

An N-acetylmethionine modification is found at M1. Disordered regions lie at residues 1–111 (MEAG…DEDW) and 534–553 (STPPSTSADQAPNNGLFTGL). Residues 23–35 (FPREEAGDSERVH) show a composition bias toward basic and acidic residues. Over residues 52–72 (KDQPSSLLSPLPQTEAASSTC) the composition is skewed to polar residues. S57 carries the post-translational modification Phosphoserine. The segment covering 78-95 (AAASDSSPPGEPESNSEG) has biased composition (low complexity). Acidic residues predominate over residues 96–108 (QGEDPDDGGDPSD). Residues 541–553 (ADQAPNNGLFTGL) are compositionally biased toward polar residues.

This sequence belongs to the MON1/SAND family. In terms of assembly, interacts with CCNT2; down-regulates CCNT2-mediated activation of viral promoters during herpes simplex virus 1/HHV-1 infection. Found in a complex with RMC1, CCZ1 MON1A and MON1B.

In Mus musculus (Mouse), this protein is Vacuolar fusion protein MON1 homolog B (Mon1b).